The following is a 364-amino-acid chain: D-alanine--D-alanine ligase (364 aa).

The region spanning 140-346 is the ATP-grasp domain; the sequence is KKLALLEGIP…YSQLIDKLIS (207 aa). Residue 173-228 coordinates ATP; that stretch reads ESEFSYPVFVKPANSGSSVGISKAKDREDLVLAIHEAFLYDTKILIEQAINAREIE. Mg(2+) is bound by residues aspartate 299, glutamate 313, and asparagine 315.

This sequence belongs to the D-alanine--D-alanine ligase family. It depends on Mg(2+) as a cofactor. Mn(2+) serves as cofactor.

It localises to the cytoplasm. It carries out the reaction 2 D-alanine + ATP = D-alanyl-D-alanine + ADP + phosphate + H(+). Its pathway is cell wall biogenesis; peptidoglycan biosynthesis. Cell wall formation. The chain is D-alanine--D-alanine ligase from Caldicellulosiruptor bescii (strain ATCC BAA-1888 / DSM 6725 / KCTC 15123 / Z-1320) (Anaerocellum thermophilum).